A 420-amino-acid chain; its full sequence is Probable glucuronosyltransferase Os04g0398600 (420 aa).

Topologically, residues 1 to 4 are cytoplasmic; sequence MGSR. Residues 5 to 25 form a helical; Signal-anchor for type II membrane protein membrane-spanning segment; sequence TVGWWLLAAAVVLAAAAADSG. The Lumenal portion of the chain corresponds to 26 to 420; that stretch reads EAERAAEQHS…AGPVGDLKAW (395 aa). N-linked (GlcNAc...) asparagine glycosylation is found at Asn147 and Asn408.

It belongs to the glycosyltransferase 47 family.

It is found in the golgi apparatus membrane. Functionally, involved in the synthesis of glucuronoxylan hemicellulose in secondary cell walls. This chain is Probable glucuronosyltransferase Os04g0398600, found in Oryza sativa subsp. japonica (Rice).